The sequence spans 294 residues: Flavin-dependent thymidylate synthase (294 aa).

Residues 27-250 (GFIRVIDYMG…PFTYEAFEEY (224 aa)) form the ThyX domain. FAD-binding positions include T73, 96-98 (RHR), and E104. DUMP-binding positions include 93–96 (QWIR), 104–108 (EYSAR), and R189. The ThyX motif signature appears at 96 to 106 (RHRTASVNEYS). FAD contacts are provided by residues 205–207 (NLH) and H211. A dUMP-binding site is contributed by R216. Catalysis depends on R216, which acts as the Involved in ionization of N3 of dUMP, leading to its activation.

The protein belongs to the thymidylate synthase ThyX family. In terms of assembly, homotetramer. FAD is required as a cofactor.

It carries out the reaction dUMP + (6R)-5,10-methylene-5,6,7,8-tetrahydrofolate + NADPH + H(+) = dTMP + (6S)-5,6,7,8-tetrahydrofolate + NADP(+). The protein operates within pyrimidine metabolism; dTTP biosynthesis. Its function is as follows. Catalyzes the reductive methylation of 2'-deoxyuridine-5'-monophosphate (dUMP) to 2'-deoxythymidine-5'-monophosphate (dTMP) while utilizing 5,10-methylenetetrahydrofolate (mTHF) as the methyl donor, and NADPH and FADH(2) as the reductant. The sequence is that of Flavin-dependent thymidylate synthase from Rickettsia prowazekii (strain Madrid E).